The chain runs to 348 residues: Calcium/calmodulin-dependent protein kinase type 1 (348 aa).

Positions Arg-7–Tyr-22 match the Nuclear localization signal 1 motif. The 257-residue stretch at Tyr-22–Ile-278 folds into the Protein kinase domain. ATP-binding positions include Leu-28–Val-36 and Lys-52. A Nuclear localization signal 2 motif is present at residues Lys-71–His-78. The active-site Proton acceptor is Asp-144. Thr-179 is subject to Phosphothreonine; by ckk-1. The autoinhibitory domain stretch occupies residues Ile-278–Leu-318. Positions Ile-288–Val-294 match the Nuclear export sequence motif. Residues Lys-297–Lys-307 carry the Nuclear localization signal 3 motif. Residues Lys-298–Gln-319 are calmodulin-binding. Residues Ser-327–Gln-338 are compositionally biased toward polar residues. The tract at residues Ser-327–Ala-348 is disordered. Residues Pro-339 to Ala-348 show a composition bias toward pro residues.

This sequence belongs to the protein kinase superfamily. CAMK Ser/Thr protein kinase family. CaMK subfamily. Interacts with importin ima-3; affinity for ima-3 is increased in the presence of Ca(2+) and calmodulin and leads to increased nuclear accumulation of cmk-1 in FLP neurons upon prolonged heat activation. Requires Mg(2+) as cofactor. Post-translationally, phosphorylation at Thr-179 can promote both nuclear export and import, sustaining nucleocytoplasmic shuttling. In terms of tissue distribution, expressed in head and tail neurons and vulval muscles. Throughout the nervous system. Detected in neurites and neuronal cell bodies. Expressed in the mechanosensory neurons, AVM and ALM, and in the interneurons, AVA, AVB and AVD. Expressed in the right and left ASE neurons where it functions cell-autonomously to control salt-avoidance learning. Expressed in FLP and AFD thermosensory neurons.

The protein localises to the nucleus. It is found in the cytoplasm. The enzyme catalyses L-seryl-[protein] + ATP = O-phospho-L-seryl-[protein] + ADP + H(+). It carries out the reaction L-threonyl-[protein] + ATP = O-phospho-L-threonyl-[protein] + ADP + H(+). Its activity is regulated as follows. Activated by Ca(2+)/calmodulin. Binding of calmodulin results in a conformational change that generates functional binding sites for both substrate and ATP, and thus relieves autoinhibition and lowers the Km of substrate binding. Must be phosphorylated by ckk-1 to be maximally active but this does not appear to be required for activity in AFD neurons. Functionally, calcium/calmodulin-dependent protein kinase that operates in the calcium-triggered CaMKK-CaMK1 signaling cascade which results in transcriptional activation. Transcriptional activation occurs at least in part through phosphorylation of crh-1. Regulates gene expression, sensory morphology, and function of the AFD thermosensory neurons. Involved in long-term adaptation of AFD neurons to temperatures warmer than the initial acclimatized cultivation temperature. Acts in the FLP thermal nociceptors to moderate the responsiveness to noxious heat and controls neuropeptide release from FLP neurons in response to temperature elevations. Regulates the dauer decision, the decision of the larvae to enter into the alternative stress-resistant and long-lived dauer developmental stage, based on the feeding state, primarily in the AWC sensory neurons. Acts non cell-autonomously in the AWC neurons to regulate expression of the daf-28 insulin-like peptide and cell-autonomously in the ASI sensory neurons to regulate expression of the growth promoting daf-7 in a food-regulated manner. Plays a role in memory-based thermal response of an individual AFD neuron cell. Influences habituation and sensitivity to repeated mechanosensory stimuli. Involved in chemotaxis response in AWC neurons to attractant 2-heptanone, a volatile organic compound emitted by the nematode pathogenic bacterium B.nematocida B16. Acts in the ASE salt-sensing neurons to promote a type of aversive gustatory-associated learning called salt-avoidance learning via regulation of crh-1 signaling and the promotion of long-term memory formation, but is not involved in salt attraction. Represses transcription of glutamate receptor glr-1 in the nucleus basally and in response to changes in synaptic activity. In Caenorhabditis elegans, this protein is Calcium/calmodulin-dependent protein kinase type 1.